A 212-amino-acid chain; its full sequence is Calaxin (212 aa).

EF-hand domains are found at residues 65-100, 101-136, and 146-181; these read TDDMIMDRVFRGFDKDNDGCISVSEWIHGLSLFLRG, TLDEKMKYCFEVFDLNGDGFISKEEMFHMLKNSLLK, and GIKDLVEITLKKMDHDHDGKLSFVDYEKAVREENLL. The Ca(2+) site is built by D78, D80, D82, C84, E89, D114, N116, D118, E125, D159, D161, D163, K165, and D170.

Component of the outer dynein arm-docking complex along with ODAD1, ODAD2, ODAD3 and ODAD4.

Its subcellular location is the cytoplasm. It localises to the cytoskeleton. It is found in the cilium axoneme. The protein resides in the cell projection. The protein localises to the cilium. Its subcellular location is the flagellum. Component of the outer dynein arm-docking complex (ODA-DC) that mediates outer dynein arms (ODA) binding onto the doublet microtubule. Seems to regulate the assembly of both ODAs and their axonemal docking complex onto ciliary microtubules. Regulates ciliary and flagellar motility and is required for cilia-driven determination of body laterality. This chain is Calaxin (Clxn), found in Mus musculus (Mouse).